Reading from the N-terminus, the 870-residue chain is Valine--tRNA ligase (870 aa).

Positions proline 42–histidine 52 match the 'HIGH' region motif. A 'KMSKS' region motif is present at residues lysine 527–serine 531. Lysine 530 contacts ATP. A coiled-coil region spans residues leucine 800–glycine 870.

This sequence belongs to the class-I aminoacyl-tRNA synthetase family. ValS type 1 subfamily. In terms of assembly, monomer.

It is found in the cytoplasm. The enzyme catalyses tRNA(Val) + L-valine + ATP = L-valyl-tRNA(Val) + AMP + diphosphate. Its function is as follows. Catalyzes the attachment of valine to tRNA(Val). As ValRS can inadvertently accommodate and process structurally similar amino acids such as threonine, to avoid such errors, it has a 'posttransfer' editing activity that hydrolyzes mischarged Thr-tRNA(Val) in a tRNA-dependent manner. This is Valine--tRNA ligase from Campylobacter jejuni (strain RM1221).